The chain runs to 99 residues: Large ribosomal subunit protein bL27 (99 aa).

The propeptide occupies 1–9 (MLLMNLQLF).

This sequence belongs to the bacterial ribosomal protein bL27 family. The N-terminus is cleaved by ribosomal processing cysteine protease Prp.

This chain is Large ribosomal subunit protein bL27, found in Clostridium novyi (strain NT).